The primary structure comprises 242 residues: 7-cyano-7-deazaguanine synthase (242 aa).

12–22 (FSGGQDSATCL) is an ATP binding site. Zn(2+) contacts are provided by Cys-200, Cys-215, Cys-218, and Cys-221.

The protein belongs to the QueC family. Zn(2+) serves as cofactor.

The catalysed reaction is 7-carboxy-7-deazaguanine + NH4(+) + ATP = 7-cyano-7-deazaguanine + ADP + phosphate + H2O + H(+). Its pathway is purine metabolism; 7-cyano-7-deazaguanine biosynthesis. Its function is as follows. Catalyzes the ATP-dependent conversion of 7-carboxy-7-deazaguanine (CDG) to 7-cyano-7-deazaguanine (preQ(0)). This chain is 7-cyano-7-deazaguanine synthase, found in Gluconobacter oxydans (strain 621H) (Gluconobacter suboxydans).